Consider the following 194-residue polypeptide: Small ribosomal subunit protein uS5 (194 aa).

An S5 DRBM domain is found at leucine 26–valine 89.

Belongs to the universal ribosomal protein uS5 family. Part of the 30S ribosomal subunit. Contacts proteins S4 and S8.

In terms of biological role, with S4 and S12 plays an important role in translational accuracy. Located at the back of the 30S subunit body where it stabilizes the conformation of the head with respect to the body. This is Small ribosomal subunit protein uS5 from Sulfurihydrogenibium sp. (strain YO3AOP1).